Reading from the N-terminus, the 994-residue chain is Chloride channel protein 1 (994 aa).

The Cytoplasmic segment spans residues 1 to 118 (MERSQSQQHG…VLRRKLGEDW (118 aa)). The segment at 37 to 61 (SENGGLQHRPRKDLGPRHNAHPTQI) is disordered. A helical membrane pass occupies residues 119 to 150 (IFLVLLGLLMALVSWCMDYVSAKSLQAYKWTY). The Extracellular segment spans residues 151–158 (AQMQPSLP). A helical transmembrane segment spans residues 159–179 (LQYLAWVTFPLILILFSALFC). Residues 180–183 (QLIS) are Cytoplasmic-facing. The segment at residues 184 to 189 (PQAVGS) is an intramembrane region (note=Loop between two helices). A Selectivity filter part_1 motif is present at residues 188–192 (GSGIP). Ser-189 contributes to the chloride binding site. The helical intramembrane region spans 190–195 (GIPEMK). At 196–208 (TILRGVVLKEYLT) the chain is on the cytoplasmic side. Residues 209-224 (LKAFVAKVVALTAGLG) constitute an intramembrane region (helical). The note=Loop between two helices intramembrane region spans 225–230 (SGIPVG). Positions 230–234 (GKEGP) match the Selectivity filter part_2 motif. Residues 231-246 (KEGPFVHIASICAAVL) constitute an intramembrane region (helical). The Cytoplasmic portion of the chain corresponds to 247–268 (SKFMSMFSGVYEQPYYYTDILT). 2 consecutive intramembrane regions (helical) follow at residues 269–280 (VGCAVGVGCCFG) and 281–290 (TPLGGVLFSI). Residues 291-301 (EVTSTYFAVRN) are Cytoplasmic-facing. Residues 302 to 321 (YWRGFFAATFSAFVFRVLAV) form a helical membrane-spanning segment. Residues 322 to 347 (WNKDAVTITALFRTNFRMDFPFDLKE) are Extracellular-facing. The chain crosses the membrane as a helical span at residues 348–376 (LPAFAVIGICCGFLGAVFVYLHRQVMLGV). The Cytoplasmic portion of the chain corresponds to 377-390 (RKHKALSQFLAKHR). Residues 391 to 408 (LLYPGIVTFVIASLTFPP) form a helical membrane-spanning segment. Topologically, residues 409-414 (GMGQFM) are extracellular. An intramembrane region (note=Loop between two helices) is located at residues 415 to 418 (AGEL). The helical intramembrane region spans 419–426 (MPREAIST). The Extracellular portion of the chain corresponds to 427–457 (LFDNNTWVKHIGDPKSLGQSAVWIHPQVNVV). The segment at residues 458–475 (IIILLFFVMKFWMSIVAT) is an intramembrane region (helical). Positions 476 to 482 (TMPIPCG) form an intramembrane region, note=Loop between two helices. The Selectivity filter part_3 signature appears at 482-486 (GGFMP). Residues 483-498 (GFMPVFVLGAAFGRLV) constitute an intramembrane region (helical). Phe-484 lines the chloride pocket. Residues 499 to 521 (GEIMAMLFPEGILFDDIIYKILP) are Extracellular-facing. Positions 522–538 (GGYAVIGAAALTGAVSH) form an intramembrane region, helical. An intramembrane region (note=Loop between two helices) is located at residues 539–540 (TV). The segment at residues 541-554 (STAVICFELTGQIA) is an intramembrane region (helical). At 555–557 (HIL) the chain is on the extracellular side. Positions 558 to 571 (PMMVAVILANMVAQ) form an intramembrane region, helical. The note=Loop between two helices intramembrane region spans 572 to 575 (SLQP). The helical intramembrane region spans 576–578 (SLY). Tyr-578 contributes to the chloride binding site. Residues 579–994 (DSIIQVKKLP…DEEDEDELIL (416 aa)) lie on the Cytoplasmic side of the membrane. Residues 609–668 (MVRDVKFVSASCTYGELRNLLQTTTVKTLPLVDSKDSMILLGSVERSELQSLLQRHLCAE) form the CBS 1 domain. Disordered regions lie at residues 710–769 (EDED…SADQ), 880–923 (TKSG…DGAP), and 965–994 (NLGPEEDLADILHGPSLRSTDEEDEDELIL). Over residues 725–741 (TPTPPPPPPPPLPPQFP) the composition is skewed to pro residues. A CBS 2 domain is found at 827–882 (IDQSPFQLVEQTTLHKTHTLFSLLGLHLAYVTSMGKLRGVLALEELQKAIKGHTKS). Ser-892 carries the post-translational modification Phosphoserine. The segment covering 985–994 (DEEDEDELIL) has biased composition (acidic residues).

This sequence belongs to the chloride channel (TC 2.A.49) family. ClC-1/CLCN1 subfamily. Homodimer. Predominantly expressed in skeletal muscles.

The protein resides in the cell membrane. It is found in the sarcolemma. It localises to the T-tubule. It catalyses the reaction chloride(in) = chloride(out). It carries out the reaction bromide(in) = bromide(out). The catalysed reaction is iodide(out) = iodide(in). The enzyme catalyses thiocyanate(in) = thiocyanate(out). It catalyses the reaction nitrate(in) = nitrate(out). Modulated by membrane voltage with depolarization favouring channel opening and hyperpolarization favouring channel closure. Inhibited by acidic pH and ATP binding due to a shift of voltage dependence of common gating to more positive voltages. Inhibited by 9-anthracene-carboxylic acid. Functionally, voltage-gated chloride channel involved in skeletal muscle excitability. Generates most of the plasma membrane chloride conductance in skeletal muscle fibers, stabilizes the resting membrane potential and contributes to the repolarization phase during action potential firing. Forms a homodimeric channel where each subunit has its own ion conduction pathway. Conducts double-barreled currents controlled by two types of gates, two fast glutamate gates that control each subunit independently and a slow common gate that opens and shuts off both subunits simultaneously. Has a significant open probability at muscle resting potential and is further activated upon membrane depolarization. Permeable to small monovalent anions with ion selectivity for chloride &gt; thiocyanate &gt; bromide &gt; nitrate &gt; iodide. The protein is Chloride channel protein 1 (Clcn1) of Rattus norvegicus (Rat).